Consider the following 93-residue polypeptide: uncharacterized protein (93 aa).

This is an uncharacterized protein from Schizosaccharomyces pombe (strain 972 / ATCC 24843) (Fission yeast).